Reading from the N-terminus, the 512-residue chain is SNF1-related protein kinase catalytic subunit alpha KIN10 (512 aa).

One can recognise a Protein kinase domain in the interval 19–271; the sequence is YKLGRTLGIG…IPEIRQHPWF (253 aa). A Glycyl lysine isopeptide (Lys-Gly) (interchain with G-Cter in ubiquitin) cross-link involves residue Lys20. 25 to 33 provides a ligand contact to ATP; the sequence is LGIGSFGRV. Lys34 is covalently cross-linked (Glycyl lysine isopeptide (Lys-Gly) (interchain with G-Cter in SUMO)). Lys48 serves as a coordination point for ATP. Residue Lys63 forms a Glycyl lysine isopeptide (Lys-Gly) (interchain with G-Cter in SUMO) linkage. Asp142 (proton acceptor) is an active-site residue. Ser164 carries the phosphoserine modification. Thr175 carries the phosphothreonine; by GRIK1 or GRIK2 modification. The auto-inhibitory domain (AID) stretch occupies residues 290–389; the sequence is AKKIDEEILQ…GLRSQYPVER (100 aa). Residues 292 to 332 form the UBA domain; sequence KIDEEILQEVINMGFDRNHLIESLRNRTQNDGTVTYYLILD. The regulatory domain (RD) stretch occupies residues 294–512; the sequence is DEEILQEVIN…AAFLAQLRVL (219 aa). Ser364 carries the post-translational modification Phosphoserine. Lys390 is covalently cross-linked (Glycyl lysine isopeptide (Lys-Gly) (interchain with G-Cter in SUMO)). A PPI region spans residues 390 to 512; sequence KWALGLQSRA…AAFLAQLRVL (123 aa). One can recognise a KA1 domain in the interval 463-511; the sequence is AVKSPNVVKFEIQLYKTRDDKYLLDLQRVQGPQFLFLDLCAAFLAQLRV.

The protein belongs to the protein kinase superfamily. CAMK Ser/Thr protein kinase family. SNF1 subfamily. In terms of assembly, subunit of a probable heterotrimeric complex consisting of an alpha catalytic (KIN10 or KIN11) subunit, and a beta (KINB) and a gamma (KING or SNF4) non-catalytic regulatory subunits. Interacts with KINB2, KINB3, SNF4 and probably with KINB1 and KING1. Interacts with SKP1/ASK1, PAD1, the N-terminus of PRL1 and the WD40 domain of 5PTase13. Potential subunit of a SCF ubiquitin ligase complex consisting of a SNF1-related protein kinase, SKP1 and CUL1. The association of the SCF complex with the proteasome may be mediated by PAD1 and seems to be inhibited by the interaction with PRL1. Interacts with ATAF1. Interacts with ESD4. Interacts with SCE1. Interacts with FUS3. Interacts with PP2C74. Interacts with CDKE1. Interacts with ABI1 and PP2CA. Interacts with KRP6. Interacts with CIPK14. Interacts with FLZ proteins through their FLZ-type zinc finger domains. Interacts with GEBP/STKR1. Interacts with MYC2. Interacts with IDD8. Interacts with BZIP63. Interacts with PTL. Interacts with FLZ3, FLZ9, TCP3, TCP13, HB21/ZHD3 and HB23/ZHD10. Interacts with PTP1. Interacts with RAPTOR1B. Forms oligomers in vitro under strongly reducing conditions. Interacts with WRI1. Interacts with EIN3. Component of a ternary complex composed of BZIP2-BZIP63 heterodimer and KIN10. Interacts with IPK2b. Interacts with FLZ6 and FLZ10. Post-translationally, phosphorylated at Thr-175 in response to glucose. Phosphorylated at Thr-175 under submergence. Autophosphorylated. Dephosphorylated at Thr-175 by ABI1 and PP2CA. Ubiquitinated. Degradation is mediated by a CUL4-based E3 ligase that uses PRL1 as a substrate receptor. In terms of processing, sumoylated by SIZ1. Sumoylated SnRK1 is ubiquitinated and degraded by the proteasome. As to expression, isoform 2 is widely expressed, especially in newly developing tissues. Isoform 2 is expressed throughout the seedling, with highest expression in leaf primordia and vascular tissue, and the seedling root tip. Isoform 2 is later expressed in developing lateral root primordia and developing embryos within siliques. Isoform 1 is widely expressed but at very low levels.

It is found in the plastid. The protein localises to the chloroplast. Its subcellular location is the cytoplasm. The protein resides in the nucleus. It localises to the golgi apparatus. It is found in the endoplasmic reticulum. It catalyses the reaction L-seryl-[protein] + ATP = O-phospho-L-seryl-[protein] + ADP + H(+). The enzyme catalyses L-threonyl-[protein] + ATP = O-phospho-L-threonyl-[protein] + ADP + H(+). Its activity is regulated as follows. Activated by phosphorylation at Thr-175 by GRIK1/SNAK2 and GRIK2/SNAK1. Inactivated by dephosphorylation at Thr-175. Inhibited by trehalose-6-phosphate. Down-regulated by SR45 by affecting its stability. Reduced kinase activity in response to H(2)O(2) treatment. The redox-state of Cys-177 seems to directly influence its kinase activity. Down-regulated by FLZ6 and FLZ10. Catalytic subunit of the probable trimeric SNF1-related protein kinase (SnRK) complex, a central regulator of cellular energy homeostasis, which, in response to seemingly unrelated darkness, sugar and stress conditions, activates energy-producing pathways and inhibits energy-consuming processes. May play a role in a signal transduction cascade regulating gene expression and carbohydrate metabolism in higher plants. The SnRK complex may also be involved in the regulation of fatty acid synthesis by phosphorylation of acetyl-CoA carboxylase and in assimilation of nitrogen by phosphorylating nitrate reductase. In vitro, KIN10 exhibits kinase activity on sucrose phosphate synthase and the kinase activity is inhibited by PRL1. May be a subunit of a SCF ubiquitin ligase complex and thus be involved in proteasomal ubiquitination. Phosphorylates GRIK1/SNAK2 and GRIK2/SNAK1 in vitro. Cooperates with FUS3 to regulate developmental phase transitions and lateral organ development and act both as positive regulators of abscisic acid (ABA) signaling during germination. Phosphorylates FUS3 in embryo. Negatively modulates MYC2 accumulation through its protein phosphorylation. Phosphorylates geminivirus (CaLCuV, TGMV, ToMoV) AL2 protein resulting in a delay in the viral DNA accumulation and symptom appearance during infection. Regulates bZIP63 activity to alter metabolism in response to starvation through its protein phosphorylation. Under sugar deprivation conditions, antagonizes the IDD8 function in flowering time control by its protein phosphorylation. Plays a cardinal role in the control of cell proliferation through inhibition of KRP6 activity by its protein phosphorylation. Under submergence, phosphorylates PTP1, leading to the release of the MPK6 signaling pathway inhibition. Triggers its own SUMO-mediated proteasomal degradation, establishing a negative feedback loop that attenuates SnRK1 signaling and prevents detrimental hyperactivation of stress responses. Phosphorylates RAPTOR1B in vitro. Phosphorylates and down-regulates HMGR1S in vitro. Kinase activity is redox-sensitive. Acts upstream of TOR in the regulation of autophagy. Required for the activation of autophagy by many abiotic stresses. Involved in positive regulation of autophagy, possibly by affecting the phosphorylation of ATG1 proteins. Negatively modulates WRI1 accumulation through its protein phosphorylation. Modulates leaf senescence progression by the negative regulation of EIN3 accumulation through its protein phosphorylation. Under extended darkness, C/S1-bZIP-SnRK1 complex interacts with the histone acetylation machinery to remodel chromatin and facilitate transcription. BZIP2-BZIP63-KIN10 complex binds to the ETFQO promoter to up-regulate its transcription. Phosphorylates and down-regulates IPK2b in vitro. Involved in the regulation of sucrose-induced hypocotyl elongation under light/dark cycles. In Arabidopsis thaliana (Mouse-ear cress), this protein is SNF1-related protein kinase catalytic subunit alpha KIN10.